We begin with the raw amino-acid sequence, 616 residues long: Formin-binding protein 1 (616 aa).

The required for self-association and induction of membrane tubulation stretch occupies residues methionine 1–glutamate 79. The F-BAR domain maps to methionine 1–aspartate 264. The segment at methionine 1–threonine 334 is interaction with microtubules. 2 positions are modified to N6-acetyllysine: lysine 66 and lysine 110. Residues tyrosine 67 to isoleucine 259 are a coiled coil. The required for self-association and induction of membrane tubulation stretch occupies residues glycine 251–serine 616. Disordered stretches follow at residues glycine 280 to glycine 314 and leucine 332 to leucine 366. Residues serine 296 and serine 299 each carry the phosphoserine modification. A compositionally biased stretch (pro residues) spans histidine 337–serine 346. A phosphoserine mark is found at serine 348 and serine 358. Residues proline 398 to glutamate 490 are a coiled coil. The segment at glutamate 399–isoleucine 551 is interaction with RND2. An REM-1 domain is found at asparagine 403–glutamate 480. The segment at alanine 487–histidine 531 is disordered. The tract at residues arginine 494–serine 616 is interaction with PDE6G. At serine 496 the chain carries Phosphoserine. Tyrosine 499 carries the post-translational modification Phosphotyrosine. Positions glutamine 502–alanine 511 are enriched in polar residues. A required for interaction with TNKS region spans residues aspartate 513 to serine 616. Phosphoserine is present on serine 520. The segment at leucine 534 to serine 616 is interaction with DNM1 and DNM3. The SH3 domain occupies proline 549 to aspartate 610. The interaction with ARHGAP17, DAAM1, DIAPH1 and DIAPH2 stretch occupies residues proline 549 to serine 616. The interaction with DNM2 and WASL stretch occupies residues glycine 552–tyrosine 608. The interval glycine 552–leucine 609 is interaction with FASLG.

It belongs to the FNBP1 family. Homodimerizes, the dimers can polymerize end-to-end to form filamentous structures. Interacts specifically with GTP-bound RND2 and CDC42. Interacts with AKAP9, ARHGAP17, DAAM1, DIAPH1, DIAPH2, DNM1, DNM2, DNM3, FASLG/FASL, microtubules, PDE6G, SNX2 and WASL/N-WASP. May interact with TNKS. Expressed in brain and testis.

The protein resides in the cytoplasm. It is found in the cytoskeleton. It localises to the cell cortex. Its subcellular location is the lysosome. The protein localises to the cytoplasmic vesicle. The protein resides in the cell membrane. It is found in the membrane. It localises to the clathrin-coated pit. Required to coordinate membrane tubulation with reorganization of the actin cytoskeleton during the late stage of clathrin-mediated endocytosis. Binds to lipids such as phosphatidylinositol 4,5-bisphosphate and phosphatidylserine and promotes membrane invagination and the formation of tubules. Also enhances actin polymerization via the recruitment of WASL/N-WASP, which in turn activates the Arp2/3 complex. Actin polymerization may promote the fission of membrane tubules to form endocytic vesicles. May act as a link between RND2 signaling and regulation of the actin cytoskeleton. May be required for the lysosomal retention of FASLG/FASL. This Mus musculus (Mouse) protein is Formin-binding protein 1 (Fnbp1).